Here is a 117-residue protein sequence, read N- to C-terminus: Regulator of ribonuclease activity B (117 aa).

The protein belongs to the RraB family. Interacts with the C-terminal region of Rne.

The protein localises to the cytoplasm. Its function is as follows. Globally modulates RNA abundance by binding to RNase E (Rne) and regulating its endonucleolytic activity. Can modulate Rne action in a substrate-dependent manner by altering the composition of the degradosome. This Pseudoalteromonas atlantica (strain T6c / ATCC BAA-1087) protein is Regulator of ribonuclease activity B.